Consider the following 390-residue polypeptide: GTPase Obg (390 aa).

Residues 1–159 (MKFVDEASIL…RELLLELMLL (159 aa)) enclose the Obg domain. Residues 127-147 (NTRFKSSVNRTPRQKTNGTPG) are disordered. Over residues 129–145 (RFKSSVNRTPRQKTNGT) the composition is skewed to polar residues. The OBG-type G domain maps to 160 to 333 (ADVGMLGMPN…LCWDVMTFII (174 aa)). Residues 166–173 (GMPNAGKS), 191–195 (FTTLV), 213–216 (DIPG), 283–286 (NKID), and 314–316 (SAA) contribute to the GTP site. 2 residues coordinate Mg(2+): Ser-173 and Thr-193.

This sequence belongs to the TRAFAC class OBG-HflX-like GTPase superfamily. OBG GTPase family. In terms of assembly, monomer. Mg(2+) serves as cofactor.

Its subcellular location is the cytoplasm. In terms of biological role, an essential GTPase which binds GTP, GDP and possibly (p)ppGpp with moderate affinity, with high nucleotide exchange rates and a fairly low GTP hydrolysis rate. Plays a role in control of the cell cycle, stress response, ribosome biogenesis and in those bacteria that undergo differentiation, in morphogenesis control. In Escherichia coli O7:K1 (strain IAI39 / ExPEC), this protein is GTPase Obg.